Reading from the N-terminus, the 417-residue chain is Serine hydroxymethyltransferase (417 aa).

(6S)-5,6,7,8-tetrahydrofolate contacts are provided by residues Leu122 and 126–128; that span reads GHL. Lys230 carries the N6-(pyridoxal phosphate)lysine modification. 355–357 is a binding site for (6S)-5,6,7,8-tetrahydrofolate; sequence SPF.

The protein belongs to the SHMT family. In terms of assembly, homodimer. Requires pyridoxal 5'-phosphate as cofactor.

The protein resides in the cytoplasm. The enzyme catalyses (6R)-5,10-methylene-5,6,7,8-tetrahydrofolate + glycine + H2O = (6S)-5,6,7,8-tetrahydrofolate + L-serine. It participates in one-carbon metabolism; tetrahydrofolate interconversion. It functions in the pathway amino-acid biosynthesis; glycine biosynthesis; glycine from L-serine: step 1/1. Functionally, catalyzes the reversible interconversion of serine and glycine with tetrahydrofolate (THF) serving as the one-carbon carrier. This reaction serves as the major source of one-carbon groups required for the biosynthesis of purines, thymidylate, methionine, and other important biomolecules. Also exhibits THF-independent aldolase activity toward beta-hydroxyamino acids, producing glycine and aldehydes, via a retro-aldol mechanism. The chain is Serine hydroxymethyltransferase from Francisella philomiragia subsp. philomiragia (strain ATCC 25017 / CCUG 19701 / FSC 153 / O#319-036).